A 163-amino-acid chain; its full sequence is Nucleotide-binding protein HD_0358 (163 aa).

The protein belongs to the YajQ family.

Nucleotide-binding protein. This Haemophilus ducreyi (strain 35000HP / ATCC 700724) protein is Nucleotide-binding protein HD_0358.